The primary structure comprises 249 residues: 5'-nucleotidase SurE (249 aa).

A divalent metal cation-binding residues include Asp-8, Asp-9, Ser-39, and Asn-91.

Belongs to the SurE nucleotidase family. Requires a divalent metal cation as cofactor.

It is found in the cytoplasm. It catalyses the reaction a ribonucleoside 5'-phosphate + H2O = a ribonucleoside + phosphate. Functionally, nucleotidase that shows phosphatase activity on nucleoside 5'-monophosphates. The chain is 5'-nucleotidase SurE from Pseudomonas putida (strain W619).